The primary structure comprises 396 residues: Enoyl-[acyl-carrier-protein] reductase [NADH] (396 aa).

NAD(+) is bound by residues 47 to 52 (GASTGF), 73 to 74 (FE), 110 to 111 (DA), and 138 to 139 (LA). Y224 contacts substrate. The Proton donor role is filled by Y234. NAD(+) is bound by residues K243 and 272–274 (LVT).

This sequence belongs to the TER reductase family. Monomer.

The enzyme catalyses a 2,3-saturated acyl-[ACP] + NAD(+) = a (2E)-enoyl-[ACP] + NADH + H(+). It functions in the pathway lipid metabolism; fatty acid biosynthesis. Its function is as follows. Involved in the final reduction of the elongation cycle of fatty acid synthesis (FAS II). Catalyzes the reduction of a carbon-carbon double bond in an enoyl moiety that is covalently linked to an acyl carrier protein (ACP). In Flavobacterium psychrophilum (strain ATCC 49511 / DSM 21280 / CIP 103535 / JIP02/86), this protein is Enoyl-[acyl-carrier-protein] reductase [NADH].